Here is a 344-residue protein sequence, read N- to C-terminus: Phosphoribosylformylglycinamidine cyclo-ligase (344 aa).

This sequence belongs to the AIR synthase family.

The protein localises to the cytoplasm. The catalysed reaction is 2-formamido-N(1)-(5-O-phospho-beta-D-ribosyl)acetamidine + ATP = 5-amino-1-(5-phospho-beta-D-ribosyl)imidazole + ADP + phosphate + H(+). It participates in purine metabolism; IMP biosynthesis via de novo pathway; 5-amino-1-(5-phospho-D-ribosyl)imidazole from N(2)-formyl-N(1)-(5-phospho-D-ribosyl)glycinamide: step 2/2. The sequence is that of Phosphoribosylformylglycinamidine cyclo-ligase from Neisseria meningitidis serogroup C / serotype 2a (strain ATCC 700532 / DSM 15464 / FAM18).